Here is a 262-residue protein sequence, read N- to C-terminus: Tropinone reductase homolog At2g29310 (262 aa).

13-37 serves as a coordination point for NADP(+); that stretch reads LVTGAASGIGYAIVEELASFGAIIH. A substrate-binding site is contributed by Ser-146. The active-site Proton acceptor is Tyr-159.

The protein belongs to the short-chain dehydrogenases/reductases (SDR) family. SDR65C subfamily.

This Arabidopsis thaliana (Mouse-ear cress) protein is Tropinone reductase homolog At2g29310.